The chain runs to 576 residues: Arginine--tRNA ligase (576 aa).

The short motif at 122 to 132 is the 'HIGH' region element; it reads PNVAKQMHVGH.

This sequence belongs to the class-I aminoacyl-tRNA synthetase family. In terms of assembly, monomer.

Its subcellular location is the cytoplasm. It catalyses the reaction tRNA(Arg) + L-arginine + ATP = L-arginyl-tRNA(Arg) + AMP + diphosphate. The polypeptide is Arginine--tRNA ligase (Yersinia pseudotuberculosis serotype I (strain IP32953)).